A 648-amino-acid polypeptide reads, in one-letter code: 5-aminolevulinate synthase, mitochondrial (648 aa).

The transit peptide at 1–26 (MEALLQQSRAMCPFLKRSSPNTLRSL) directs the protein to the mitochondrion. Residues 69–109 (KRFTSSAAGVPGAGAGTPKPTRGSPGKRALHSTGGNGANMS) are disordered. Residues arginine 170, serine 283, and lysine 302 each contribute to the substrate site. Pyridoxal 5'-phosphate-binding residues include serine 335, histidine 363, and threonine 409. Lysine 412 is a catalytic residue. Lysine 412 is subject to N6-(pyridoxal phosphate)lysine. Positions 441 and 442 each coordinate pyridoxal 5'-phosphate. Threonine 527 contacts substrate.

This sequence belongs to the class-II pyridoxal-phosphate-dependent aminotransferase family. Homodimer. The cofactor is pyridoxal 5'-phosphate.

The protein resides in the mitochondrion matrix. The enzyme catalyses succinyl-CoA + glycine + H(+) = 5-aminolevulinate + CO2 + CoA. It participates in porphyrin-containing compound metabolism; protoporphyrin-IX biosynthesis; 5-aminolevulinate from glycine: step 1/1. Catalyzes the synthesis of 5-aminolevulinate (ALA) from succinyl-CoA and glycine, the first and rate-limiting step in heme biosynthesis. This is 5-aminolevulinate synthase, mitochondrial (hemA) from Emericella nidulans (strain FGSC A4 / ATCC 38163 / CBS 112.46 / NRRL 194 / M139) (Aspergillus nidulans).